Reading from the N-terminus, the 461-residue chain is tRNA (guanine(10)-N(2))-methyltransferase TRMT11 (461 aa).

It belongs to the class I-like SAM-binding methyltransferase superfamily. TRM11 methyltransferase family. Part of the heterodimeric TRMT11-TRM112 methyltransferase complex; this complex forms an active tRNA methyltransferase, where TRMT112 acts as an activator of the catalytic subunit TRMT11.

It localises to the cytoplasm. It carries out the reaction guanosine(10) in tRNA + S-adenosyl-L-methionine = N(2)-methylguanosine(10) in tRNA + S-adenosyl-L-homocysteine + H(+). Functionally, catalytic subunit of the TRMT11-TRM112 methyltransferase complex, that specifically mediates the S-adenosyl-L-methionine-dependent N(2)-methylation of guanosine nucleotide at position 10 (m2G10) in tRNAs. This is one of the major tRNA (guanine-N(2))-methyltransferases. The polypeptide is tRNA (guanine(10)-N(2))-methyltransferase TRMT11 (Gallus gallus (Chicken)).